An 84-amino-acid chain; its full sequence is Large ribosomal subunit protein bL27 (84 aa).

The disordered stretch occupies residues 1-22 (MAKTKAGGSTKNGRDSAGRRLG).

The protein belongs to the bacterial ribosomal protein bL27 family.

The chain is Large ribosomal subunit protein bL27 from Mesomycoplasma hyopneumoniae (strain 232) (Mycoplasma hyopneumoniae).